Here is a 748-residue protein sequence, read N- to C-terminus: MTLTTEKQVKVVVDRDVVPTSFEKWAKPGHFSRSLAKGPKTTTWIWNLHADAHDFDSHTSSLEEVSRKIFSAHFGQLAIIFIWLSGMYFHGARFSNYVAWLSNPTGIKPSAQVVWPIVGQQILNADVGGGMQGIQITSGLFQLWRASGIVNELQLYVTALGGLGMAGLMIFAGWFHYHKAAPKLEWFQNVESMLNHHLAGLLGLGSLSWAGHQIHVSLPINKLLDAGVAPSSIPLPHEFILNRNLMAELYPSFQQGLVPFFTLNWKQYSDILTFKGGLSPVTGGLWLTDVAHHHLAIAVLFLVAGHMYRTNWGIGHSIKQILEAHKGPLTGEGHKGLYEILTTSWHANLAINLAMLGSLSIIVAHHMYAMPPYPYLATDYPTQLSLFTHHMWIGGFCIVGAGAHAAIYMVRDYSPTVNFNNVLDRMIRHRDAIISHLNWVCIFLGMHSFGLYIHNDTMRALGRAQDMFSDTAIQLQPVFAQWIQQIHTLAPGNTAVNALATASYAFGADTVTVGSKIAMMPIKLGTADFMVHHIHAFTIHVTTLILLKGVLYARNSRLIPDKANLGFRFPCDGPGRGGTCQVSAWDHVFLGLFWMYNALSIVIFHFSWKMQSDVWGTVTSNGAISHITGGNFAQSAITINGWLRDFLWAQASQVIQSYGSSLSAYGLMFLGAHFVWAFSLMFLFSGRGYWQELIESIVWAHNKLKVAPAIAPRALSITQGRAVGVAHYLLGGIATTWAFFLARIIAVG.

8 consecutive transmembrane segments (helical) span residues 69 to 92 (IFSA…FHGA), 155 to 178 (LYVT…FHYH), 194 to 218 (LNHH…HVSL), 290 to 308 (VAHH…GHMY), 345 to 368 (WHAN…HHMY), 384 to 410 (LSLF…IYMV), 432 to 454 (AIIS…LYIH), and 529 to 547 (FMVH…LILL). [4Fe-4S] cluster is bound by residues C571 and C580. Transmembrane regions (helical) follow at residues 587-608 (HVFL…HFSW) and 662-684 (LSAY…MFLF). H673 lines the chlorophyll a' pocket. Residues M681 and Y689 each contribute to the chlorophyll a site. W690 lines the phylloquinone pocket. A helical transmembrane segment spans residues 722–742 (AVGVAHYLLGGIATTWAFFLA).

This sequence belongs to the PsaA/PsaB family. The PsaA/B heterodimer binds the P700 chlorophyll special pair and subsequent electron acceptors. PSI consists of a core antenna complex that captures photons, and an electron transfer chain that converts photonic excitation into a charge separation. The eukaryotic PSI reaction center is composed of at least 11 subunits. Requires P700 is a chlorophyll a/chlorophyll a' dimer, A0 is one or more chlorophyll a, A1 is one or both phylloquinones and FX is a shared 4Fe-4S iron-sulfur center. as cofactor.

The protein resides in the plastid. It is found in the chloroplast thylakoid membrane. The enzyme catalyses reduced [plastocyanin] + hnu + oxidized [2Fe-2S]-[ferredoxin] = oxidized [plastocyanin] + reduced [2Fe-2S]-[ferredoxin]. PsaA and PsaB bind P700, the primary electron donor of photosystem I (PSI), as well as the electron acceptors A0, A1 and FX. PSI is a plastocyanin/cytochrome c6-ferredoxin oxidoreductase, converting photonic excitation into a charge separation, which transfers an electron from the donor P700 chlorophyll pair to the spectroscopically characterized acceptors A0, A1, FX, FA and FB in turn. Oxidized P700 is reduced on the lumenal side of the thylakoid membrane by plastocyanin or cytochrome c6. This Cyanidioschyzon merolae (strain NIES-3377 / 10D) (Unicellular red alga) protein is Photosystem I P700 chlorophyll a apoprotein A1.